The chain runs to 66 residues: Large ribosomal subunit protein bL35 (66 aa).

This sequence belongs to the bacterial ribosomal protein bL35 family.

This is Large ribosomal subunit protein bL35 from Moorella thermoacetica (strain ATCC 39073 / JCM 9320).